The following is a 301-amino-acid chain: Inosose dehydratase (301 aa).

This sequence belongs to the IolE/MocC family. Glutathione is required as a cofactor. The cofactor is Co(2+). Requires Mn(2+) as cofactor.

It catalyses the reaction scyllo-inosose = 3D-3,5/4-trihydroxycyclohexane-1,2-dione + H2O. Catalyzes the dehydration of inosose (2-keto-myo-inositol, 2KMI or 2,4,6/3,5-pentahydroxycyclohexanone) to 3D-(3,5/4)-trihydroxycyclohexane-1,2-dione (D-2,3-diketo-4-deoxy-epi-inositol). The polypeptide is Inosose dehydratase (Salmonella typhimurium (strain LT2 / SGSC1412 / ATCC 700720)).